Consider the following 243-residue polypeptide: MCSRGWDSCLALELLLLPLSLLVTSIQGHLVHMTVVSGSNVTLNISESLPENYKQLTWFYTFDQKIVEWDSRKSKYFESKFKGRVRLDPQSGALYISKVQKEDNSTYIMRVLKKTGNEQEWKIKLQVLDPVPKPVIKIEKIEDMDDNCYLKLSCVIPGESVNYTWYGDKRPFPKELQNSVLETTLMPHNYSRCYTCQVSNSVSSKNGTVCLSPPCTLARSFGVEWIASWLVVTVPTILGLLLT.

The N-terminal stretch at 1–26 (MCSRGWDSCLALELLLLPLSLLVTSI) is a signal peptide. Ig-like C2-type domains are found at residues 29-127 (HLVH…KLQV) and 132-212 (PKPV…VCLS). 5 N-linked (GlcNAc...) asparagine glycosylation sites follow: Asn-40, Asn-44, Asn-104, Asn-162, and Asn-189. Residues Cys-154 and Cys-196 are joined by a disulfide bond. A lipid anchor (GPI-anchor amidated serine) is attached at Ser-220. Residues 221–243 (FGVEWIASWLVVTVPTILGLLLT) constitute a propeptide, removed in mature form.

As to quaternary structure, interacts with CD2. Interacts with CD244; this interaction is possible not only on different cells (trans interaction) but also on the same cell (cis interaction). Interacts with LCK. Widely expressed on all hematopoietic cells.

It is found in the cell membrane. The protein localises to the membrane raft. It localises to the secreted. Glycosylphosphatidylinositol (GPI)-anchored cell surface glycoprotein that interacts via its N-terminal immunoglobulin domain with cell surface receptors including CD244/2B4 or CD2 to regulate immune cell function and activation. Participates in T-cell signaling transduction by associating with CD2 and efficiently bringing the Src family protein kinase LCK and LAT to the TCR/CD3 complex. In turn, promotes LCK phosphorylation and subsequent activation. Induces the phosphorylation of the cytoplasmic immunoreceptortyrosine switch motifs (ITSMs) of CD244 initiating a series of signaling events that leads to the generation of the immunological synapse and the directed release of cytolytic granules containing perforin and granzymes by T-lymphocytes and NK-cells. The polypeptide is CD48 antigen (CD48) (Homo sapiens (Human)).